The sequence spans 253 residues: Ubiquinone/menaquinone biosynthesis C-methyltransferase UbiE (253 aa).

S-adenosyl-L-methionine-binding positions include threonine 76, aspartate 97, 125-126 (NA), and serine 142.

Belongs to the class I-like SAM-binding methyltransferase superfamily. MenG/UbiE family.

The catalysed reaction is a 2-demethylmenaquinol + S-adenosyl-L-methionine = a menaquinol + S-adenosyl-L-homocysteine + H(+). It carries out the reaction a 2-methoxy-6-(all-trans-polyprenyl)benzene-1,4-diol + S-adenosyl-L-methionine = a 5-methoxy-2-methyl-3-(all-trans-polyprenyl)benzene-1,4-diol + S-adenosyl-L-homocysteine + H(+). It functions in the pathway quinol/quinone metabolism; menaquinone biosynthesis; menaquinol from 1,4-dihydroxy-2-naphthoate: step 2/2. The protein operates within cofactor biosynthesis; ubiquinone biosynthesis. Functionally, methyltransferase required for the conversion of demethylmenaquinol (DMKH2) to menaquinol (MKH2) and the conversion of 2-polyprenyl-6-methoxy-1,4-benzoquinol (DDMQH2) to 2-polyprenyl-3-methyl-6-methoxy-1,4-benzoquinol (DMQH2). The protein is Ubiquinone/menaquinone biosynthesis C-methyltransferase UbiE of Xanthomonas campestris pv. campestris (strain ATCC 33913 / DSM 3586 / NCPPB 528 / LMG 568 / P 25).